We begin with the raw amino-acid sequence, 4555 residues long: Protocadherin Fat 3 (4555 aa).

A signal peptide spans 1–31 (MSVTMGHCMGTKPPSCIILLLLKLFATVSQG). The Extracellular portion of the chain corresponds to 32–4153 (LPGTGPLGFH…AGHSYVGKEE (4122 aa)). Cadherin domains lie at 43–157 (THST…RPLF), 158–262 (SPTT…NEHA), 263–374 (PIIH…TPVR), 376–471 (EKDV…TPEF), 472–577 (QEAL…SPLF), 578–680 (EKVA…SKSF), 726–830 (KSFP…NPVF), 831–935 (LQDS…SPAF), 936–1042 (IPSS…TPYF), 1043–1147 (PDFA…APLT), 1148–1253 (SEPI…RPQF), 1254–1358 (PEKV…SPIP), 1362–1459 (DEPF…GPEF), 1460–1565 (SQPH…SPYF), 1566–1768 (TNPL…PPVF), 1769–1882 (LFSQ…PPVF), 1883–1985 (TQAV…TQSF), 1982–2083 (TQSF…SPVF), 2084–2185 (VGLP…MPVF), 2186–2286 (DKPF…PPVF), 2287–2393 (DQPT…PPVF), 2394–2495 (NQLI…SPAF), 2496–2599 (SQST…APQF), 2600–2707 (MTVE…LPSF), 2708–2813 (TQSQ…KPVF), 2814–2923 (ETST…APVF), 2924–3028 (AHEV…SPVC), 3029–3130 (DQVA…PPVF), 3131–3235 (SSNH…PPVF), 3236–3340 (ERRD…PPRF), 3341–3445 (SQDV…SPVF), 3446–3550 (TPAN…KPTA), and 3551–3660 (IPLE…PEDF). A glycan (N-linked (GlcNAc...) asparagine) is linked at asparagine 48. Asparagine 341 is a glycosylation site (N-linked (GlcNAc...) asparagine). N-linked (GlcNAc...) asparagine glycans are attached at residues asparagine 481, asparagine 562, asparagine 667, asparagine 799, asparagine 879, asparagine 898, and asparagine 1006. Asparagine 1367 and asparagine 1429 each carry an N-linked (GlcNAc...) asparagine glycan. The N-linked (GlcNAc...) asparagine glycan is linked to asparagine 1751. 3 N-linked (GlcNAc...) asparagine glycosylation sites follow: asparagine 1944, asparagine 1993, and asparagine 1996. N-linked (GlcNAc...) asparagine glycans are attached at residues asparagine 2208, asparagine 2292, asparagine 2331, and asparagine 2467. N-linked (GlcNAc...) asparagine glycosylation occurs at asparagine 2734. N-linked (GlcNAc...) asparagine glycosylation is present at asparagine 3000. A glycan (N-linked (GlcNAc...) asparagine) is linked at asparagine 3201. Residues asparagine 3449, asparagine 3618, and asparagine 3741 are each glycosylated (N-linked (GlcNAc...) asparagine). In terms of domain architecture, EGF-like 1 spans 3794–3832 (SNDPCVEKPCPEDMQCVGYEASRRPFLCQCPPGKLGECS). Cystine bridges form between cysteine 3798/cysteine 3809, cysteine 3803/cysteine 3821, and cysteine 3823/cysteine 3831. The 184-residue stretch at 3834–4017 (HTSLSFAGNS…VGLTELKLGC (184 aa)) folds into the Laminin G-like domain. A glycan (N-linked (GlcNAc...) asparagine) is linked at asparagine 3926. Disulfide bonds link cysteine 3984-cysteine 4017, cysteine 4024-cysteine 4035, cysteine 4029-cysteine 4045, cysteine 4047-cysteine 4056, cysteine 4063-cysteine 4074, cysteine 4068-cysteine 4083, cysteine 4085-cysteine 4094, cysteine 4101-cysteine 4112, cysteine 4106-cysteine 4121, and cysteine 4123-cysteine 4132. EGF-like domains follow at residues 4020–4057 (YPDACQRSPCLHGGSCSSLPSGGYQCSCLSQFTGTNCE) and 4059–4095 (EITACFPNPCRNGGSCDPIGNTFVCSCKAGLTGVTCE). Positions 4097 to 4133 (DVDECEREECENGGSCVNLFGSFFCNCTPGYVGQYCG) constitute an EGF-like 4; calcium-binding domain. Residues 4154-4174 (LIGIAVVLFVIFTLIVLFIVF) traverse the membrane as a helical segment. Residues 4175–4555 (RKKVFRKNYS…FVETQQQTQV (381 aa)) are Cytoplasmic-facing. Disordered regions lie at residues 4300-4353 (IRKN…YHWD) and 4395-4474 (GGYD…LGGP). Over residues 4322-4343 (CFTNSNKGSNSEVQSLSSFQSD) the composition is skewed to polar residues. Residues arginine 4508 and arginine 4518 each carry the omega-N-methylarginine modification.

Restricted to the nervous system, mainly in brain. In brain, it is highly expressed in the olfactory bulb and retina. In the developing olfactory bulb, it localizes along the dendrites of these cells as well as in their axons to some extent. In retina, it cocentrates in the inner plexiform layer throughout development (at protein level).

Its subcellular location is the membrane. May play a role in the interactions between neurites derived from specific subsets of neurons during development. The polypeptide is Protocadherin Fat 3 (Fat3) (Mus musculus (Mouse)).